The sequence spans 101 residues: Urease subunit beta (101 aa).

It belongs to the urease beta subunit family. In terms of assembly, heterotrimer of UreA (gamma), UreB (beta) and UreC (alpha) subunits. Three heterotrimers associate to form the active enzyme.

It is found in the cytoplasm. The catalysed reaction is urea + 2 H2O + H(+) = hydrogencarbonate + 2 NH4(+). It functions in the pathway nitrogen metabolism; urea degradation; CO(2) and NH(3) from urea (urease route): step 1/1. The polypeptide is Urease subunit beta (Azotobacter vinelandii (strain DJ / ATCC BAA-1303)).